We begin with the raw amino-acid sequence, 323 residues long: Phosphoribosylformylglycinamidine cyclo-ligase (323 aa).

Belongs to the AIR synthase family.

It is found in the cytoplasm. The catalysed reaction is 2-formamido-N(1)-(5-O-phospho-beta-D-ribosyl)acetamidine + ATP = 5-amino-1-(5-phospho-beta-D-ribosyl)imidazole + ADP + phosphate + H(+). It functions in the pathway purine metabolism; IMP biosynthesis via de novo pathway; 5-amino-1-(5-phospho-D-ribosyl)imidazole from N(2)-formyl-N(1)-(5-phospho-D-ribosyl)glycinamide: step 2/2. The sequence is that of Phosphoribosylformylglycinamidine cyclo-ligase from Saccharolobus solfataricus (strain ATCC 35092 / DSM 1617 / JCM 11322 / P2) (Sulfolobus solfataricus).